A 332-amino-acid polypeptide reads, in one-letter code: Glycerol-3-phosphate dehydrogenase [NAD(P)+] (332 aa).

3 residues coordinate NADPH: Trp-11, Arg-30, and Lys-108. Lys-108, Gly-137, and Ser-139 together coordinate sn-glycerol 3-phosphate. Ala-141 provides a ligand contact to NADPH. The sn-glycerol 3-phosphate site is built by Lys-192, Asp-245, Ser-255, Arg-256, and Asn-257. Catalysis depends on Lys-192, which acts as the Proton acceptor. NADPH is bound at residue Arg-256. NADPH is bound by residues Val-280 and Glu-282.

The protein belongs to the NAD-dependent glycerol-3-phosphate dehydrogenase family.

It localises to the cytoplasm. It catalyses the reaction sn-glycerol 3-phosphate + NAD(+) = dihydroxyacetone phosphate + NADH + H(+). The catalysed reaction is sn-glycerol 3-phosphate + NADP(+) = dihydroxyacetone phosphate + NADPH + H(+). It functions in the pathway membrane lipid metabolism; glycerophospholipid metabolism. Catalyzes the reduction of the glycolytic intermediate dihydroxyacetone phosphate (DHAP) to sn-glycerol 3-phosphate (G3P), the key precursor for phospholipid synthesis. This is Glycerol-3-phosphate dehydrogenase [NAD(P)+] from Burkholderia cenocepacia (strain HI2424).